Here is a 508-residue protein sequence, read N- to C-terminus: DNA-directed RNA polymerase subunit Rpo1C (508 aa).

Residues methionine 1–leucine 123 are unknown. A DNA-directed RNA polymerase subunit Rpo1C region spans residues serine 124 to lysine 508.

Belongs to the RNA polymerase beta' chain family. In terms of assembly, part of the RNA polymerase complex.

It is found in the cytoplasm. The enzyme catalyses RNA(n) + a ribonucleoside 5'-triphosphate = RNA(n+1) + diphosphate. DNA-dependent RNA polymerase (RNAP) catalyzes the transcription of DNA into RNA using the four ribonucleoside triphosphates as substrates. Forms part of the jaw domain. This chain is DNA-directed RNA polymerase subunit Rpo1C, found in Thermoplasma acidophilum (strain ATCC 25905 / DSM 1728 / JCM 9062 / NBRC 15155 / AMRC-C165).